The following is a 352-amino-acid chain: Fatty acid synthase (352 aa).

The 352-residue stretch at 1 to 352 (MEDVVIAGIA…KVVLSLEHGL (352 aa)) folds into the Ketosynthase family 3 (KS3) domain. Catalysis depends on for beta-ketoacyl synthase activity residues Cys-161, His-293, and His-331.

In terms of assembly, homodimer which monomers are arranged in a head to tail fashion.

It catalyses the reaction acetyl-CoA + n malonyl-CoA + 2n NADPH + 2n H(+) = a long-chain fatty acid + (n+1) CoA + n CO2 + 2n NADP(+).. Functionally, fatty acid synthetase catalyzes the formation of long-chain fatty acids from acetyl-CoA, malonyl-CoA and NADPH. This multifunctional protein has 7 catalytic activities as an acyl carrier protein. The protein is Fatty acid synthase (FASN) of Anser anser anser (Western greylag goose).